A 968-amino-acid chain; its full sequence is RNA polymerase-associated protein RapA (968 aa).

The Helicase ATP-binding domain maps to 164–334; the sequence is DVGRRHAPRV…FARLRLLDPN (171 aa). 177-184 is a binding site for ATP; sequence DEVGLGKT. The DEAH box motif lies at 280–283; that stretch reads DEAH. In terms of domain architecture, Helicase C-terminal spans 490–685; it reads RVEWLMGYLT…ALKAQLEQGR (196 aa).

It belongs to the SNF2/RAD54 helicase family. RapA subfamily. As to quaternary structure, interacts with the RNAP. Has a higher affinity for the core RNAP than for the holoenzyme. Its ATPase activity is stimulated by binding to RNAP.

Its function is as follows. Transcription regulator that activates transcription by stimulating RNA polymerase (RNAP) recycling in case of stress conditions such as supercoiled DNA or high salt concentrations. Probably acts by releasing the RNAP, when it is trapped or immobilized on tightly supercoiled DNA. Does not activate transcription on linear DNA. Probably not involved in DNA repair. This Salmonella choleraesuis (strain SC-B67) protein is RNA polymerase-associated protein RapA.